The primary structure comprises 274 residues: MRKVAIYGKGGIGKSTTTQNTVAGLAEMGKKIMVIGCDPKADSTRLLLGGLQQKTVLDTLREEGEEVELEDIIKDGYRNTRCTESGGPEPGVGCAGRGIITSVNLLEQLGAFDDEWDLDYVFYDVLGDVVCGGFAMPIRDGKAEEIYIVCSGEMMAMYAANNICKGILKYADTGGVRLGGLICNSRNVDNERQMIEELAKKIGTQMIHFVPRNNFVQRAEINRKTVIEYDPTHEQADEYRALAQKINDNKMFVIPKPLEIEELEALLIEFGIAN.

8 to 15 contacts ATP; that stretch reads GKGGIGKS. Cysteine 94 is a [4Fe-4S] cluster binding site. Arginine 97 is modified (ADP-ribosylarginine; by dinitrogenase reductase ADP-ribosyltransferase). Residue cysteine 131 coordinates [4Fe-4S] cluster.

The protein belongs to the NifH/BchL/ChlL family. As to quaternary structure, homodimer. [4Fe-4S] cluster serves as cofactor. The reversible ADP-ribosylation of Arg-97 inactivates the nitrogenase reductase and regulates nitrogenase activity.

It catalyses the reaction N2 + 8 reduced [2Fe-2S]-[ferredoxin] + 16 ATP + 16 H2O = H2 + 8 oxidized [2Fe-2S]-[ferredoxin] + 2 NH4(+) + 16 ADP + 16 phosphate + 6 H(+). In terms of biological role, the key enzymatic reactions in nitrogen fixation are catalyzed by the nitrogenase complex, which has 2 components: the iron protein and the molybdenum-iron protein. The chain is Nitrogenase iron protein from Pelodictyon phaeoclathratiforme (strain DSM 5477 / BU-1).